The sequence spans 369 residues: Leucine-specific-binding protein (369 aa).

Positions 1–23 are cleaved as a signal peptide; the sequence is MKRKAKTIIAGIVALAVSQGAMA. C76 and C101 are disulfide-bonded.

Belongs to the leucine-binding protein family.

The protein localises to the periplasm. This protein is a component of the leucine-specific transport system, which is one of the two periplasmic binding protein-dependent transport systems of the high-affinity transport of the branched-chain amino acids. The sequence is that of Leucine-specific-binding protein (livK) from Salmonella typhi.